The chain runs to 433 residues: ATP-dependent protease ATPase subunit HslU (433 aa).

Residues valine 18, 60–65, aspartate 246, glutamate 311, and arginine 383 contribute to the ATP site; that span reads GVGKTE.

Belongs to the ClpX chaperone family. HslU subfamily. In terms of assembly, a double ring-shaped homohexamer of HslV is capped on each side by a ring-shaped HslU homohexamer. The assembly of the HslU/HslV complex is dependent on binding of ATP.

Its subcellular location is the cytoplasm. In terms of biological role, ATPase subunit of a proteasome-like degradation complex; this subunit has chaperone activity. The binding of ATP and its subsequent hydrolysis by HslU are essential for unfolding of protein substrates subsequently hydrolyzed by HslV. HslU recognizes the N-terminal part of its protein substrates and unfolds these before they are guided to HslV for hydrolysis. The sequence is that of ATP-dependent protease ATPase subunit HslU from Rhodopseudomonas palustris (strain TIE-1).